Here is a 283-residue protein sequence, read N- to C-terminus: Transmembrane protein 45B (283 aa).

7 consecutive transmembrane segments (helical) span residues 7–27 (HALPGTFFLLFGLWWSIKCPF), 55–75 (LIEGSLKIFFAFVGIMAEQFV), 99–119 (MYLFYGISGIADVLSVSSHHV), 121–141 (VGLDRLFLSLALFVEGFLFYF), 153–173 (IHSLLLFAVFGGSASTMMEVF), 187–207 (LAILQGTWFYQIGFVLYPLSG), and 218–238 (IMFITMCFCWHLAVALLIVGI). A disordered region spans residues 261-283 (GLRKSTSTDSSSQKALLQESDEE). A compositionally biased stretch (polar residues) spans 264–275 (KSTSTDSSSQKA).

This sequence belongs to the TMEM45 family.

Its subcellular location is the membrane. The chain is Transmembrane protein 45B (tmem45b) from Danio rerio (Zebrafish).